Consider the following 290-residue polypeptide: Ribosomal protein L11 methyltransferase (290 aa).

Residues Thr-135, Gly-158, Asp-180, and Asn-227 each coordinate S-adenosyl-L-methionine.

This sequence belongs to the methyltransferase superfamily. PrmA family.

The protein localises to the cytoplasm. It catalyses the reaction L-lysyl-[protein] + 3 S-adenosyl-L-methionine = N(6),N(6),N(6)-trimethyl-L-lysyl-[protein] + 3 S-adenosyl-L-homocysteine + 3 H(+). Its function is as follows. Methylates ribosomal protein L11. This Mesorhizobium japonicum (strain LMG 29417 / CECT 9101 / MAFF 303099) (Mesorhizobium loti (strain MAFF 303099)) protein is Ribosomal protein L11 methyltransferase.